We begin with the raw amino-acid sequence, 387 residues long: 3-ketoacyl-CoA thiolase (387 aa).

The active-site Acyl-thioester intermediate is Cys91. Residues His343 and Cys373 each act as proton acceptor in the active site.

Belongs to the thiolase-like superfamily. Thiolase family. Heterotetramer of two alpha chains (FadB) and two beta chains (FadA).

Its subcellular location is the cytoplasm. The catalysed reaction is an acyl-CoA + acetyl-CoA = a 3-oxoacyl-CoA + CoA. The protein operates within lipid metabolism; fatty acid beta-oxidation. In terms of biological role, catalyzes the final step of fatty acid oxidation in which acetyl-CoA is released and the CoA ester of a fatty acid two carbons shorter is formed. This Shewanella denitrificans (strain OS217 / ATCC BAA-1090 / DSM 15013) protein is 3-ketoacyl-CoA thiolase.